The sequence spans 322 residues: Cysteine protease yopT1 (322 aa).

Active-site residues include cysteine 139, histidine 258, and aspartate 274.

This sequence belongs to the peptidase C58 family. As to quaternary structure, interacts with human ARHA.

Its subcellular location is the secreted. Functionally, cysteine protease, which is translocated into infected cells and plays a central role in pathogenesis by cleaving the C-terminus end of the human small GTPase RhoA/ARHA, a regulator of cytoskeleton. Once cleaved, ARHA loses its lipid modification, and is released from the cell membrane, leading to the subsequent disruption of actin cytoskeleton of the host cell. The sequence is that of Cysteine protease yopT1 (yopT1) from Yersinia enterocolitica.